Here is a 156-residue protein sequence, read N- to C-terminus: Probable chemoreceptor glutamine deamidase CheD (156 aa).

This sequence belongs to the CheD family.

It catalyses the reaction L-glutaminyl-[protein] + H2O = L-glutamyl-[protein] + NH4(+). Its function is as follows. Probably deamidates glutamine residues to glutamate on methyl-accepting chemotaxis receptors (MCPs), playing an important role in chemotaxis. The protein is Probable chemoreceptor glutamine deamidase CheD of Bdellovibrio bacteriovorus (strain ATCC 15356 / DSM 50701 / NCIMB 9529 / HD100).